Here is a 305-residue protein sequence, read N- to C-terminus: Ankyrin repeat domain-containing protein 23 (305 aa).

Positions 41 to 72 (QEAVAREKLKLEEEKKKKLERFNSTRFNLDNL) form a coiled coil. Positions 83–92 (KKRLRHRVPP) are enriched in basic residues. The disordered stretch occupies residues 83 to 104 (KKRLRHRVPPRKPEPLVKPQSQ). ANK repeat units follow at residues 143–172 (LHRTALHWACLKGHSQLVNKLLVAGATVDA), 176–205 (LDRTPVFWACRGGHLVILKQLLNQGARVNA), 209–238 (IGSTPLHVAVRTRHPDCLEHLIECGAHLNA), and 242–271 (EGDTALHEAVRHGSYKAMKLLLLYGAELGV). The interval 178–195 (RTPVFWACRGGHLVILKQ) is interaction with TTN.

As to quaternary structure, interacts with titin/TTN and MYPN. Mainly expressed in heart, skeletal muscle and brown adipose tissues.

The protein resides in the nucleus. In terms of biological role, may be involved in the energy metabolism. Could be a molecular link between myofibrillar stretch-induced signaling pathways and muscle gene expression. This chain is Ankyrin repeat domain-containing protein 23 (ANKRD23), found in Homo sapiens (Human).